A 355-amino-acid polypeptide reads, in one-letter code: UDP-N-acetylglucosamine--N-acetylmuramyl-(pentapeptide) pyrophosphoryl-undecaprenol N-acetylglucosamine transferase (355 aa).

UDP-N-acetyl-alpha-D-glucosamine is bound by residues 15–17 (TGG), N127, R163, S191, I244, 263–268 (ALTVSE), and Q288.

Belongs to the glycosyltransferase 28 family. MurG subfamily.

It localises to the cell inner membrane. The enzyme catalyses di-trans,octa-cis-undecaprenyl diphospho-N-acetyl-alpha-D-muramoyl-L-alanyl-D-glutamyl-meso-2,6-diaminopimeloyl-D-alanyl-D-alanine + UDP-N-acetyl-alpha-D-glucosamine = di-trans,octa-cis-undecaprenyl diphospho-[N-acetyl-alpha-D-glucosaminyl-(1-&gt;4)]-N-acetyl-alpha-D-muramoyl-L-alanyl-D-glutamyl-meso-2,6-diaminopimeloyl-D-alanyl-D-alanine + UDP + H(+). It functions in the pathway cell wall biogenesis; peptidoglycan biosynthesis. In terms of biological role, cell wall formation. Catalyzes the transfer of a GlcNAc subunit on undecaprenyl-pyrophosphoryl-MurNAc-pentapeptide (lipid intermediate I) to form undecaprenyl-pyrophosphoryl-MurNAc-(pentapeptide)GlcNAc (lipid intermediate II). This chain is UDP-N-acetylglucosamine--N-acetylmuramyl-(pentapeptide) pyrophosphoryl-undecaprenol N-acetylglucosamine transferase, found in Escherichia coli O127:H6 (strain E2348/69 / EPEC).